The chain runs to 346 residues: fMet-Leu-Phe receptor (346 aa).

N1 and N7 each carry an N-linked (GlcNAc...) asparagine glycan. Topologically, residues N1–I24 are extracellular. A helical membrane pass occupies residues I25–V47. The Cytoplasmic portion of the chain corresponds to A48–T58. A helical membrane pass occupies residues I59–V80. Over V81–F97 the chain is Extracellular. The cysteines at positions 95 and 173 are disulfide-linked. Residues I98 to L118 traverse the membrane as a helical segment. The Cytoplasmic segment spans residues D119 to S137. A helical membrane pass occupies residues L138–I159. Residues R160–R202 lie on the Extracellular side of the membrane. Residues F203–T223 traverse the membrane as a helical segment. Over K224–V239 the chain is Cytoplasmic. Residues L240–V263 form a helical membrane-spanning segment. Residues R264 to A282 are Extracellular-facing. Residues T283–G302 traverse the membrane as a helical segment. Topologically, residues Q303–A346 are cytoplasmic. Residues L321–A346 are disordered. The span at D324–P338 shows a compositional bias: polar residues.

This sequence belongs to the G-protein coupled receptor 1 family. Phosphorylated; which is necessary for desensitization.

The protein resides in the cell membrane. High affinity receptor for N-formyl-methionyl peptides (fMLP), which are powerful neutrophil chemotactic factors. Binding of fMLP to the receptor stimulates intracellular calcium mobilization and superoxide anion release. This response is mediated via a G-protein that activates a phosphatidylinositol-calcium second messenger system. Receptor for TAFA4, mediates its effects on chemoattracting macrophages, promoting phagocytosis and increasing ROS release. Receptor for cathepsin CTSG, leading to increased phagocyte chemotaxis. The polypeptide is fMet-Leu-Phe receptor (FPR1) (Macaca mulatta (Rhesus macaque)).